The following is a 233-amino-acid chain: Uridylate kinase (233 aa).

Position 7-10 (7-10 (KISG)) interacts with ATP. Glycine 49 provides a ligand contact to UMP. Residues glycine 50 and arginine 54 each coordinate ATP. UMP-binding positions include aspartate 68 and 129–136 (TGNPFFTT). Residues threonine 156, tyrosine 162, and aspartate 165 each coordinate ATP.

This sequence belongs to the UMP kinase family. Homohexamer.

The protein resides in the cytoplasm. The catalysed reaction is UMP + ATP = UDP + ADP. The protein operates within pyrimidine metabolism; CTP biosynthesis via de novo pathway; UDP from UMP (UMPK route): step 1/1. Inhibited by UTP. Catalyzes the reversible phosphorylation of UMP to UDP. This is Uridylate kinase from Neorickettsia sennetsu (strain ATCC VR-367 / Miyayama) (Ehrlichia sennetsu).